A 1151-amino-acid chain; its full sequence is Calcium-activated potassium channel subunit alpha-1 (1151 aa).

Residues 1-36 (MSSNIHANHLSLDASSSSSSSSSSSSSSSSSSSVHE) form a disordered region. The Extracellular segment spans residues 1–59 (MSSNIHANHLSLDASSSSSSSSSSSSSSSSSSSVHEPKMDALIIPVTMEVPCDSRGQRM). Residues 15–33 (SSSSSSSSSSSSSSSSSSS) are compositionally biased toward low complexity. Residues 60 to 80 (WWAFLASSMVTFFGGLFIILL) traverse the membrane as a helical segment. The Cytoplasmic segment spans residues 81–151 (WRTLKYLWTV…MISAQTLTGR (71 aa)). S-palmitoyl cysteine attachment occurs at residues Cys91, Cys92, and Cys94. The helical transmembrane segment at 152–172 (VLVVLVFALSIGALVIYFIDS) threads the bilayer. Residues 173–187 (SNPIESCQNFYKDFT) are Extracellular-facing. The helical transmembrane segment at 188–208 (LQIDMAFNVFFLLYFGLRFIA) threads the bilayer. Residues 209 to 212 (ANDK) are Cytoplasmic-facing. The helical transmembrane segment at 213-233 (LWFWLEVNSVVDFFTVPPVFV) threads the bilayer. Topologically, residues 234–237 (SVYL) are extracellular. The helical; Voltage-sensor transmembrane segment at 238–258 (NRSWLGLRFLRALRLIQFSEI) threads the bilayer. The Cytoplasmic portion of the chain corresponds to 259-273 (LQFLNILKTSNSIKL). Residues 274–294 (VNLLSIFISTWLTAAGFIHLV) traverse the membrane as a helical segment. At 295 to 308 (ENSGDPWENFQNNQ) the chain is on the extracellular side. Residues 309–331 (ALTYWECVYLLMVTMSTVGYGDV) constitute an intramembrane region (pore-forming). Residues 325-328 (TVGY) carry the Selectivity for potassium motif. At 332 to 340 (YAKTTLGRL) the chain is on the extracellular side. The helical transmembrane segment at 341–361 (FMVFFILGGLAMFASYVPEII) threads the bilayer. Residues 362-1151 (ELIGNRKKYG…KQKYVQEERL (790 aa)) lie on the Cytoplasmic side of the membrane. In terms of domain architecture, RCK N-terminal 1 spans 380–522 (RKHIVVCGHI…WNWKEGDDAI (143 aa)). Glu412, Gln435, and Glu437 together coordinate Mg(2+). The segment S7 stretch occupies residues 529–549 (LGFIAQSCLAQGLSTMLANLF). The segment at 586–606 (LSFPTVCELCFVKLKLLMIAI) is segment S8. Residues 650–654 (CKACH) are heme-binding motif. The interval 674-702 (EQPSTLSPKKKQRNGGMRNSPNSSPKLMR) is disordered. At Thr678 the chain carries Phosphothreonine. Residues Ser680, Ser693, and Ser697 each carry the phosphoserine modification. Residues 752-772 (VLSGHVVVCIFGDVSSALIGL) are segment S9. Residues 754–898 (SGHVVVCIFG…MDRSSPDNSP (145 aa)) form the RCK N-terminal 2 domain. Position 885 is a phosphothreonine (Thr885). A phosphoserine mark is found at Ser893 and Ser897. The Calcium bowl motif lies at 918–940 (TELVNDTNVQFLDQDDDDDPDTE). Residues Gln927, Asp930, Asp933, and Asp935 each coordinate Ca(2+). A segment S10 region spans residues 947-967 (FACGTAFAVSVLDSLMSATYF). The segment covering 1101 to 1126 (RASLSHSSHSSQSSSKKSSSVHSIPS) has biased composition (low complexity). Residues 1101–1151 (RASLSHSSHSSQSSSKKSSSVHSIPSTANRQNRPKSRESRDKQKYVQEERL) are disordered. The span at 1135 to 1151 (KSRESRDKQKYVQEERL) shows a compositional bias: basic and acidic residues. Phosphoserine occurs at positions 1136 and 1139.

This sequence belongs to the potassium channel family. Calcium-activated (TC 1.A.1.3) subfamily. KCa1.1/KCNMA1 sub-subfamily. As to quaternary structure, homotetramer; which constitutes the calcium-activated potassium channel. Interacts with beta subunits KCNMB1, KCNMB2, KCNMB3 and KCNMB4. Interacts with gamma subunits LRRC26, LRRC38, LRRC52 and LRRC55. Beta and gamma subunits are accessory, and modulate its activity. Interacts with RAB11B. In terms of processing, phosphorylated. Phosphorylation by kinases such as PKA and/or PKG. In smooth muscles, phosphorylation affects its activity. Palmitoylation by ZDHHC22 and ZDHHC23 within the intracellular linker between the S0 and S1 transmembrane domains regulates localization to the plasma membrane. Depalmitoylated by LYPLA1 and LYPLAL1, leading to retard exit from the trans-Golgi network.

The protein localises to the cell membrane. The enzyme catalyses K(+)(in) = K(+)(out). Its activity is regulated as follows. Ethanol and carbon monoxide-bound heme increase channel activation. Heme inhibits channel activation. Functionally, potassium channel activated by both membrane depolarization or increase in cytosolic Ca(2+) that mediates export of K(+). It is also activated by the concentration of cytosolic Mg(2+). Its activation dampens the excitatory events that elevate the cytosolic Ca(2+) concentration and/or depolarize the cell membrane. It therefore contributes to repolarization of the membrane potential. Plays a key role in controlling excitability in a number of systems, such as regulation of the contraction of smooth muscle, the tuning of hair cells in the cochlea, regulation of transmitter release, and innate immunity. In smooth muscles, its activation by high level of Ca(2+), caused by ryanodine receptors in the sarcoplasmic reticulum, regulates the membrane potential. In cochlea cells, its number and kinetic properties partly determine the characteristic frequency of each hair cell and thereby helps to establish a tonotopic map. Kinetics of KCNMA1 channels are determined by alternative splicing, phosphorylation status and its combination with modulating beta subunits. Highly sensitive to both iberiotoxin (IbTx) and charybdotoxin (CTX). In Macaca mulatta (Rhesus macaque), this protein is Calcium-activated potassium channel subunit alpha-1 (KCNMA1).